A 303-amino-acid polypeptide reads, in one-letter code: Porphobilinogen deaminase (303 aa).

An S-(dipyrrolylmethanemethyl)cysteine modification is found at Cys235.

Belongs to the HMBS family. As to quaternary structure, monomer. Dipyrromethane serves as cofactor.

It catalyses the reaction 4 porphobilinogen + H2O = hydroxymethylbilane + 4 NH4(+). It participates in porphyrin-containing compound metabolism; protoporphyrin-IX biosynthesis; coproporphyrinogen-III from 5-aminolevulinate: step 2/4. Functionally, tetrapolymerization of the monopyrrole PBG into the hydroxymethylbilane pre-uroporphyrinogen in several discrete steps. This chain is Porphobilinogen deaminase, found in Campylobacter fetus subsp. fetus (strain 82-40).